The primary structure comprises 216 residues: uncharacterized protein (216 aa).

Residues 5–22 (LGLVFGSVILIYLISLFL) form a helical membrane-spanning segment.

The protein resides in the membrane. This is an uncharacterized protein from Aquifex aeolicus (strain VF5).